We begin with the raw amino-acid sequence, 322 residues long: Glycerol-3-phosphate dehydrogenase [NAD(P)+] (322 aa).

Trp13, His33, and Lys99 together coordinate NADPH. Residues Lys99, Gly127, and Ser129 each contribute to the sn-glycerol 3-phosphate site. Ala131 is a binding site for NADPH. Positions 182, 235, 245, 246, and 247 each coordinate sn-glycerol 3-phosphate. Lys182 acts as the Proton acceptor in catalysis. Arg246 contributes to the NADPH binding site. Glu272 provides a ligand contact to NADPH.

The protein belongs to the NAD-dependent glycerol-3-phosphate dehydrogenase family.

It is found in the cytoplasm. The enzyme catalyses sn-glycerol 3-phosphate + NAD(+) = dihydroxyacetone phosphate + NADH + H(+). The catalysed reaction is sn-glycerol 3-phosphate + NADP(+) = dihydroxyacetone phosphate + NADPH + H(+). Its pathway is membrane lipid metabolism; glycerophospholipid metabolism. Functionally, catalyzes the reduction of the glycolytic intermediate dihydroxyacetone phosphate (DHAP) to sn-glycerol 3-phosphate (G3P), the key precursor for phospholipid synthesis. The sequence is that of Glycerol-3-phosphate dehydrogenase [NAD(P)+] from Ruthia magnifica subsp. Calyptogena magnifica.